Consider the following 123-residue polypeptide: Small ribosomal subunit protein uS12 (123 aa).

Position 89 is a 3-methylthioaspartic acid (Asp-89).

This sequence belongs to the universal ribosomal protein uS12 family. In terms of assembly, part of the 30S ribosomal subunit. Contacts proteins S8 and S17. May interact with IF1 in the 30S initiation complex.

With S4 and S5 plays an important role in translational accuracy. In terms of biological role, interacts with and stabilizes bases of the 16S rRNA that are involved in tRNA selection in the A site and with the mRNA backbone. Located at the interface of the 30S and 50S subunits, it traverses the body of the 30S subunit contacting proteins on the other side and probably holding the rRNA structure together. The combined cluster of proteins S8, S12 and S17 appears to hold together the shoulder and platform of the 30S subunit. The sequence is that of Small ribosomal subunit protein uS12 from Acidiphilium cryptum (strain JF-5).